Consider the following 135-residue polypeptide: Translation initiation factor 2 subunit beta (135 aa).

The protein belongs to the eIF-2-beta/eIF-5 family. In terms of assembly, heterotrimer composed of an alpha, a beta and a gamma chain.

Its function is as follows. eIF-2 functions in the early steps of protein synthesis by forming a ternary complex with GTP and initiator tRNA. The protein is Translation initiation factor 2 subunit beta (eif2b) of Methanothermobacter thermautotrophicus (strain ATCC 29096 / DSM 1053 / JCM 10044 / NBRC 100330 / Delta H) (Methanobacterium thermoautotrophicum).